A 397-amino-acid polypeptide reads, in one-letter code: S-adenosylmethionine synthase (397 aa).

Residue H15 participates in ATP binding. Residue D17 participates in Mg(2+) binding. Residue E43 coordinates K(+). Residues E56 and Q99 each contribute to the L-methionine site. The interval Q99–A109 is flexible loop. ATP contacts are provided by residues D173 to K175, K242 to F243, D251, R257 to K258, A274, and K278. An L-methionine-binding site is contributed by D251. Position 282 (K282) interacts with L-methionine.

Belongs to the AdoMet synthase family. As to quaternary structure, homotetramer; dimer of dimers. It depends on Mg(2+) as a cofactor. The cofactor is K(+).

It localises to the cytoplasm. It catalyses the reaction L-methionine + ATP + H2O = S-adenosyl-L-methionine + phosphate + diphosphate. The protein operates within amino-acid biosynthesis; S-adenosyl-L-methionine biosynthesis; S-adenosyl-L-methionine from L-methionine: step 1/1. Catalyzes the formation of S-adenosylmethionine (AdoMet) from methionine and ATP. The overall synthetic reaction is composed of two sequential steps, AdoMet formation and the subsequent tripolyphosphate hydrolysis which occurs prior to release of AdoMet from the enzyme. The polypeptide is S-adenosylmethionine synthase (Cutibacterium acnes (strain DSM 16379 / KPA171202) (Propionibacterium acnes)).